We begin with the raw amino-acid sequence, 127 residues long: 3-aminoacrylate deaminase RutC (127 aa).

The protein belongs to the RutC family.

It carries out the reaction (Z)-3-aminoacrylate + H2O + H(+) = 3-oxopropanoate + NH4(+). In terms of biological role, involved in pyrimidine catabolism. Catalyzes the deamination of 3-aminoacrylate to malonic semialdehyde, a reaction that can also occur spontaneously. RutC may facilitate the reaction and modulate the metabolic fitness, rather than catalyzing essential functions. This Pseudomonas savastanoi pv. phaseolicola (strain 1448A / Race 6) (Pseudomonas syringae pv. phaseolicola (strain 1448A / Race 6)) protein is 3-aminoacrylate deaminase RutC.